A 298-amino-acid polypeptide reads, in one-letter code: Acetylglutamate kinase (298 aa).

Residues 69 to 70 (GG), R91, and N196 each bind substrate.

It belongs to the acetylglutamate kinase family. ArgB subfamily.

The protein localises to the cytoplasm. It carries out the reaction N-acetyl-L-glutamate + ATP = N-acetyl-L-glutamyl 5-phosphate + ADP. It functions in the pathway amino-acid biosynthesis; L-arginine biosynthesis; N(2)-acetyl-L-ornithine from L-glutamate: step 2/4. Its function is as follows. Catalyzes the ATP-dependent phosphorylation of N-acetyl-L-glutamate. This chain is Acetylglutamate kinase, found in Rhodopseudomonas palustris (strain BisB18).